The following is a 929-amino-acid chain: Dual serine/threonine and tyrosine protein kinase (929 aa).

Low complexity predominate over residues 1–14; that stretch reads MEGDGVPWGSEPVS. Residues 1–21 are disordered; sequence MEGDGVPWGSEPVSGPGPGGG. Coiled coils occupy residues 189-215 and 395-431; these read EEDLEVQENNEDAAHVLAELEVTMHHA and RKKENELYESLMNIANRKQEEMKDMIVETLNTMKEEL. The Protein kinase domain maps to 652–906; that stretch reads PKLGQELGRG…PLLGIVQPML (255 aa). Residues 658–666 and Lys-681 each bind ATP; that span reads LGRGQYGVV. Asp-777 serves as the catalytic Proton acceptor.

The protein belongs to the protein kinase superfamily. Ser/Thr protein kinase family. As to expression, predominantly expressed in skeletal muscle and testis. Expressed in basolateral and apical membranes of all tubular epithelia. Expressed in thin ascending limb of the loop of Henle and the distal convoluted tubule. Expressed in all layers of transitional ureteric epithelium and in the ureteric smooth-muscle cells. Weakly expressed in heart, brain, placenta, kidney, pancreas, spleen, thymus, prostate, uterus, small intestine, white blood cells, stomach, spinal cord and adrenal gland. Is widely distributed in the CNS. Also detected in several tumor cell lines. Expressed in the skin.

It is found in the cytoplasm. It localises to the cell membrane. The protein localises to the apical cell membrane. Its subcellular location is the basolateral cell membrane. The protein resides in the cell junction. The enzyme catalyses L-seryl-[protein] + ATP = O-phospho-L-seryl-[protein] + ADP + H(+). It carries out the reaction L-threonyl-[protein] + ATP = O-phospho-L-threonyl-[protein] + ADP + H(+). It catalyses the reaction L-tyrosyl-[protein] + ATP = O-phospho-L-tyrosyl-[protein] + ADP + H(+). Functionally, acts as a positive regulator of ERK phosphorylation downstream of fibroblast growth factor-receptor activation. Involved in the regulation of both caspase-dependent apoptosis and caspase-independent cell death. In the skin, it plays a predominant role in suppressing caspase-dependent apoptosis in response to UV stress in a range of dermal cell types. This chain is Dual serine/threonine and tyrosine protein kinase (DSTYK), found in Homo sapiens (Human).